Here is an 852-residue protein sequence, read N- to C-terminus: Protein SBE22 (852 aa).

Residues 1–158 (MTSIQERGTS…ADKSKINTFP (158 aa)) form a disordered region. Over residues 15 to 26 (SLKEGEASDRSS) the composition is skewed to basic and acidic residues. Polar residues predominate over residues 43 to 61 (PPSQTTLGRSRAGSNTMNK). At Ser-72 the chain carries Phosphoserine. A compositionally biased stretch (polar residues) spans 74 to 96 (NLLSNMNCSDNGNGGNMLNSFVN). Over residues 124-139 (TTEVFSSTSASSSLGD) the composition is skewed to low complexity. Ser-201 bears the Phosphoserine mark. The interval 206–248 (AAEKTMNKSRHSYQEQFSSKKSQSSLLNSKQRSRAKSQTCSST) is disordered. The span at 224–235 (SKKSQSSLLNSK) shows a compositional bias: low complexity. A phosphoserine mark is found at Ser-459, Ser-517, and Ser-520.

This sequence belongs to the SBE2 family.

It is found in the cytoplasm. The protein localises to the golgi apparatus. In terms of biological role, with SBE2, is involved in cell wall integrity and polarity processes like bud growth, through the transport of CHS3 and UTR2 to sites of growth. In Saccharomyces cerevisiae (strain YJM789) (Baker's yeast), this protein is Protein SBE22 (SBE22).